A 114-amino-acid chain; its full sequence is MNFGKAAIFGVVLFCLLWTEGAQAGLTFLSPADMQKIAERQSQNKLRHGNMNRRGVEDDLAGEEIGVTFPLDMKMTQEQFQKQRAAVQDFLYSSLLSLGSVQDTEDKNENPQSQ.

The N-terminal stretch at 1 to 24 is a signal peptide; the sequence is MNFGKAAIFGVVLFCLLWTEGAQA. Residue T27 is the site of O-decanoyl threonine; alternate attachment. T27 is lipidated: O-octanoyl threonine; alternate. A propeptide spans 55-114 (removed in mature form); that stretch reads GVEDDLAGEEIGVTFPLDMKMTQEQFQKQRAAVQDFLYSSLLSLGSVQDTEDKNENPQSQ.

This sequence belongs to the motilin family. Post-translationally, O-octanoylated by GOAT/MBOAT4. O-octanoylation or O-decanoylation is essential for activity. The O-decanoylated form ghrelin-27-C10 differs in the length of the carbon backbone of the carboxylic acid bound to Thr-27. 33% of frog ghrelin is O-decanoylated. 80% of frog ghrelin has Asn-52 cleaved from its C-terminus giving rise to ghrelin-27. In terms of tissue distribution, high levels in stomach. Moderate levels in small intestine, pancreas and testis. Low levels in heart, lung and gall bladder.

Its subcellular location is the secreted. In terms of biological role, ligand for growth hormone secretagogue receptor type 1 (GHSR). Induces the release of growth hormone from the pituitary. Has an appetite-stimulating effect, induces adiposity and stimulates gastric acid secretion. Involved in growth regulation. In Aquarana catesbeiana (American bullfrog), this protein is Ghrelin (GHRL).